A 281-amino-acid polypeptide reads, in one-letter code: Sulfur carrier protein FdhD (281 aa).

Residue Cys117 is the Cysteine persulfide intermediate of the active site.

This sequence belongs to the FdhD family.

Its subcellular location is the cytoplasm. In terms of biological role, required for formate dehydrogenase (FDH) activity. Acts as a sulfur carrier protein that transfers sulfur from IscS to the molybdenum cofactor prior to its insertion into FDH. This is Sulfur carrier protein FdhD from Xanthomonas axonopodis pv. citri (strain 306).